The primary structure comprises 315 residues: Thymidylate synthase (315 aa).

DUMP contacts are provided by residues R22 and 177–178; that span reads RR. Catalysis depends on C197, which acts as the Nucleophile. Residues 217–220, N228, and 258–260 each bind dUMP; these read RSAD and HLY. D220 contributes to the (6R)-5,10-methylene-5,6,7,8-tetrahydrofolate binding site. Residue A314 coordinates (6R)-5,10-methylene-5,6,7,8-tetrahydrofolate.

It belongs to the thymidylate synthase family. Bacterial-type ThyA subfamily. As to quaternary structure, homodimer.

It localises to the cytoplasm. It carries out the reaction dUMP + (6R)-5,10-methylene-5,6,7,8-tetrahydrofolate = 7,8-dihydrofolate + dTMP. The protein operates within pyrimidine metabolism; dTTP biosynthesis. Functionally, catalyzes the reductive methylation of 2'-deoxyuridine-5'-monophosphate (dUMP) to 2'-deoxythymidine-5'-monophosphate (dTMP) while utilizing 5,10-methylenetetrahydrofolate (mTHF) as the methyl donor and reductant in the reaction, yielding dihydrofolate (DHF) as a by-product. This enzymatic reaction provides an intracellular de novo source of dTMP, an essential precursor for DNA biosynthesis. The sequence is that of Thymidylate synthase from Enterococcus faecalis (strain ATCC 700802 / V583).